Here is a 294-residue protein sequence, read N- to C-terminus: Putative sugar lactone lactonase (294 aa).

Residues E21, N150, and D201 each coordinate a divalent metal cation. Residue D201 is the Proton donor/acceptor of the active site.

This sequence belongs to the SMP-30/CGR1 family. Requires a divalent metal cation as cofactor.

Involved in the degradation of galactose via the DeLey-Doudoroff pathway. The sequence is that of Putative sugar lactone lactonase from Rhizobium meliloti (strain 1021) (Ensifer meliloti).